Reading from the N-terminus, the 948-residue chain is Hexagonally packed intermediate-layer surface protein (948 aa).

Residues 1–17 form the signal peptide; the sequence is MKKNIALMALTGILTLA. 2 disulfides stabilise this stretch: Cys168–Cys187 and Cys554–Cys666.

Glycosylated. Contains tightly bound reducing sugars (six per polypeptide chain) and fatty acids (covalently bound and located in the N-terminal region).

The protein resides in the secreted. Its subcellular location is the cell wall. It is found in the S-layer. Shape maintenance, possible protection from noxious enzymes or exogenous and unsettling DNA, and may mediate homotypic cell-cell contacts. This is Hexagonally packed intermediate-layer surface protein (hpi) from Deinococcus radiodurans (strain ATCC 13939 / DSM 20539 / JCM 16871 / CCUG 27074 / LMG 4051 / NBRC 15346 / NCIMB 9279 / VKM B-1422 / R1).